We begin with the raw amino-acid sequence, 418 residues long: Cell division protein FtsZ (418 aa).

Residues 27 to 31 (GGGSN), 114 to 116 (GTG), E145, K149, and D193 each bind GTP. The tract at residues 386 to 418 (KNGVKGHTFGVPLPSVNEDLDEPTFLRNRNKGL) is disordered.

Belongs to the FtsZ family. In terms of assembly, homodimer. Polymerizes to form a dynamic ring structure in a strictly GTP-dependent manner. Interacts directly with several other division proteins.

The protein localises to the cytoplasm. Essential cell division protein that forms a contractile ring structure (Z ring) at the future cell division site. The regulation of the ring assembly controls the timing and the location of cell division. One of the functions of the FtsZ ring is to recruit other cell division proteins to the septum to produce a new cell wall between the dividing cells. Binds GTP and shows GTPase activity. In Treponema pallidum (strain Nichols), this protein is Cell division protein FtsZ.